Consider the following 367-residue polypeptide: Germination protease (367 aa).

Positions 1–15 (MKEPLDLSKYSIRTD) are excised as a propeptide.

Belongs to the peptidase A25 family. Homotetramer. Post-translationally, autoproteolytically processed. The inactive tetrameric zymogen termed p46 autoprocesses to a smaller form termed p41, which is active only during spore germination.

It carries out the reaction Endopeptidase action with P4 Glu or Asp, P1 preferably Glu &gt; Asp, P1' hydrophobic and P2' Ala.. Functionally, initiates the rapid degradation of small, acid-soluble proteins during spore germination. This Bacillus cereus (strain ATCC 14579 / DSM 31 / CCUG 7414 / JCM 2152 / NBRC 15305 / NCIMB 9373 / NCTC 2599 / NRRL B-3711) protein is Germination protease.